The following is a 993-amino-acid chain: DNA-binding protein SMUBP-2 (993 aa).

Ala-2 is modified (N-acetylalanine). ATP contacts are provided by residues 213–220, Gln-402, Tyr-441, and Glu-570; that span reads GPPGTGKT. The interval 637-783 is SS DNA-binding; the sequence is TAFEYLDDIV…KARHITVSRR (147 aa). 3 disordered regions span residues 650-723, 765-815, and 837-872; these read YTHE…GPDR, LRHD…EPVT, and RQQS…KGPV. 2 stretches are compositionally biased toward polar residues: residues 667–683 and 703–716; these read PSTS…SGQE and HVQS…NGSD. The R3H domain maps to 721–784; that stretch reads PDRTEHFRAT…ARHITVSRRS (64 aa). The segment covering 765 to 775 has biased composition (basic and acidic residues); sequence LRHDSTGEGKA. Residues 784–794 are compositionally biased toward low complexity; the sequence is SPASSGSVAPQ. Phosphoserine occurs at positions 797 and 800. The segment covering 837-847 has biased composition (polar residues); that stretch reads RQQSSQAQTAK. Residues 862–866 carry the Nuclear localization signal motif; it reads KKKKK. Residues 889-938 form an AN1-type; degenerate zinc finger; it reads VKADNTCSFSKCSVSTTTLGQFCMHCSHRYYLSHHLPEIHGCGEKARAHA. Positions 911, 914, 928, and 930 each coordinate Zn(2+). A disordered region spans residues 953–993; it reads GTKDRALDPAKRAQLQRRLDKKLGELSSQRTSRKKEKERGT. A compositionally biased stretch (basic and acidic residues) spans 954 to 976; sequence TKDRALDPAKRAQLQRRLDKKLG.

The protein belongs to the DNA2/NAM7 helicase family. In terms of assembly, homooligomer. Interacts with RUVBL1. Interacts with RUVBL2. Interacts with GTF3C1. Interacts with ABT1. Interacts with ribosomes. In all tissues examined.

It localises to the nucleus. It is found in the cytoplasm. The protein resides in the cell projection. The protein localises to the axon. It catalyses the reaction ATP + H2O = ADP + phosphate + H(+). In terms of biological role, 5' to 3' helicase that unwinds RNA and DNA duplexes in an ATP-dependent reaction. Specific to 5'-phosphorylated single-stranded guanine-rich sequences. May play a role in RNA metabolism, ribosome biogenesis or initiation of translation. May play a role in regulation of transcription. Interacts with tRNA-Tyr. The chain is DNA-binding protein SMUBP-2 (Ighmbp2) from Mus musculus (Mouse).